The following is a 356-amino-acid chain: tRNA N6-adenosine threonylcarbamoyltransferase (356 aa).

2 residues coordinate Fe cation: histidine 114 and histidine 118. Substrate-binding positions include 136–140 (LVSGG), aspartate 169, glycine 182, and asparagine 280. Fe cation is bound at residue aspartate 308. The segment at 333-356 (ARPRWPLDNSQPALLGSGKKGAKA) is disordered.

It belongs to the KAE1 / TsaD family. Fe(2+) is required as a cofactor.

It localises to the cytoplasm. The enzyme catalyses L-threonylcarbamoyladenylate + adenosine(37) in tRNA = N(6)-L-threonylcarbamoyladenosine(37) in tRNA + AMP + H(+). In terms of biological role, required for the formation of a threonylcarbamoyl group on adenosine at position 37 (t(6)A37) in tRNAs that read codons beginning with adenine. Is involved in the transfer of the threonylcarbamoyl moiety of threonylcarbamoyl-AMP (TC-AMP) to the N6 group of A37, together with TsaE and TsaB. TsaD likely plays a direct catalytic role in this reaction. This is tRNA N6-adenosine threonylcarbamoyltransferase from Dinoroseobacter shibae (strain DSM 16493 / NCIMB 14021 / DFL 12).